The primary structure comprises 550 residues: Palmdelphin (550 aa).

Met-1 carries the post-translational modification N-acetylmethionine. Residues 2–106 (EEAELVKERL…LQISTNEEAI (105 aa)) adopt a coiled-coil conformation. Residue Lys-125 forms a Glycyl lysine isopeptide (Lys-Gly) (interchain with G-Cter in SUMO2) linkage. Ser-135 carries the phosphoserine modification. Lys-179 participates in a covalent cross-link: Glycyl lysine isopeptide (Lys-Gly) (interchain with G-Cter in SUMO1); alternate. Residue Lys-179 forms a Glycyl lysine isopeptide (Lys-Gly) (interchain with G-Cter in SUMO2); alternate linkage. Residues 248–259 (ERNSKSPTEYHE) show a composition bias toward basic and acidic residues. Residues 248–280 (ERNSKSPTEYHEPVYANPFCRPTTPQREKVTPG) form a disordered region. A Phosphothreonine modification is found at Thr-271. Ser-321, Ser-370, Ser-384, and Ser-385 each carry phosphoserine. Disordered regions lie at residues 356–393 (VMQDKYTPSPKSGLSPSRALVEKSERQSSSPPCQEDEK) and 463–528 (HPIA…IAGD). The span at 483–494 (KRAEVNPHENTN) shows a compositional bias: basic and acidic residues. Phosphoserine is present on residues Ser-497, Ser-514, and Ser-519.

This sequence belongs to the paralemmin family. As to quaternary structure, interacts with GLUL. Phosphorylated.

The protein resides in the cytoplasm. It is found in the cell projection. The protein localises to the dendrite. Its subcellular location is the dendritic spine. This chain is Palmdelphin (PALMD), found in Bos taurus (Bovine).